A 200-amino-acid polypeptide reads, in one-letter code: Pyrrolidone-carboxylate peptidase (200 aa).

Residues E78, C141, and H165 contribute to the active site.

It belongs to the peptidase C15 family. Homotetramer.

The protein resides in the cytoplasm. The catalysed reaction is Release of an N-terminal pyroglutamyl group from a polypeptide, the second amino acid generally not being Pro.. Its function is as follows. Removes 5-oxoproline from various penultimate amino acid residues except L-proline. In Lactobacillus acidophilus (strain ATCC 700396 / NCK56 / N2 / NCFM), this protein is Pyrrolidone-carboxylate peptidase.